We begin with the raw amino-acid sequence, 194 residues long: Threonylcarbamoyl-AMP synthase (194 aa).

In terms of domain architecture, YrdC-like spans 11-194; that stretch reads FRNLMKIINA…GINYKIIRKG (184 aa).

Belongs to the SUA5 family. TsaC subfamily.

The protein localises to the cytoplasm. It carries out the reaction L-threonine + hydrogencarbonate + ATP = L-threonylcarbamoyladenylate + diphosphate + H2O. Functionally, required for the formation of a threonylcarbamoyl group on adenosine at position 37 (t(6)A37) in tRNAs that read codons beginning with adenine. Catalyzes the conversion of L-threonine, HCO(3)(-)/CO(2) and ATP to give threonylcarbamoyl-AMP (TC-AMP) as the acyladenylate intermediate, with the release of diphosphate. This chain is Threonylcarbamoyl-AMP synthase, found in Wigglesworthia glossinidia brevipalpis.